We begin with the raw amino-acid sequence, 491 residues long: GTPase Der (491 aa).

EngA-type G domains are found at residues 54 to 217 (PVLA…PEYS) and 229 to 402 (RRIA…ESWD). GTP is bound by residues 60 to 67 (GRPNVGKS), 107 to 111 (DTGGW), 169 to 172 (NKVD), 235 to 242 (GRPNVGKS), 282 to 286 (DTAGI), and 347 to 350 (NKWD). Residues 403–485 (RRIPTGRLNA…PIEVNMRVRE (83 aa)) enclose the KH-like domain.

Belongs to the TRAFAC class TrmE-Era-EngA-EngB-Septin-like GTPase superfamily. EngA (Der) GTPase family. Associates with the 50S ribosomal subunit.

GTPase that plays an essential role in the late steps of ribosome biogenesis. The sequence is that of GTPase Der from Paenarthrobacter aurescens (strain TC1).